The sequence spans 97 residues: Small ribosomal subunit protein bS20 (97 aa).

The protein belongs to the bacterial ribosomal protein bS20 family.

Binds directly to 16S ribosomal RNA. The protein is Small ribosomal subunit protein bS20 of Synechocystis sp. (strain ATCC 27184 / PCC 6803 / Kazusa).